Reading from the N-terminus, the 1151-residue chain is MEKPNYFQSYNKVIGATGEQLAPGAVPPHPVLAPSIAPGGVAGVSAANMANIMQTPGFANLVQQAIRTQLENQAAQQLAVNQQFQLNGATAVQQQLLLTPQQSLAQPIALAPQPTVVLNGVSETLKKVTELAHRQFQSGNYVEAEKYCNLVFQSDPNNLPTLLLLSAINFQTKNLEKSMQYSMLAIKVNNQCAEAYSNLGNYYKEKGQLQDALENYKLAVKLKPEFIDAYINLAAALVSGGDLEQAVTAYFNALQINPDLYCVRSDLGNLLKAMGRLEEAKVCYLKAIETQPQFAVAWSNLGCVFNSQGEIWLAIHHFEKAVTLDPNFLDAYINLGNVLKEARIFDRAVSAYLRALNLSGNHAVVHGNLACVYYEQGLIDLAIDTYKKAIDLQPHFPDAYCNLANALKEKGSVVEAEQMYMKALELCPTHADSQNNLANIKREQGKIEDATRLYLKALEIYPEFAAAHSNLASILQQQGKLNDAILHYKEAIRIAPTFADAYSNMGNTLKEMGDSSAAIACYNRAIQINPAFADAHSNLASIHKDAGNMAEAIQSYSTALKLKPDFPDAYCNLAHCHQIICDWNDYDKRVRKLVQIVEDQLCKKRLPSVHPHHSMLYPLSHAARIAIAAKHASLCFDKVHVQMLGKTPLIHADRFSVQNGQRLRIGYVSSDFGNHPTSHLMQSIPGMHDRSRVEVFCYALSVNDGTNFRSKLMNESEHFVDLSQIPCNGKAAEKIAQDGIHILINMNGYTKGARNEIFALRPAPIQVMWLGYPSTSGATFMDYIITDAVTSPLRLANAFTEKLAYMPHTFFIGDHAQMLRHLTDKVVVKDKETTERDSCLIMNTANMDPILAKSEIKEQVLDTEVVSGPNKELVRAEMVLPVLEVPTEPIKQMIMTGQMTMNVMEDMNVQNGLGQSQMHHKAATGEEIPNSVLLTSRAQYQLPDDAIVFCNFNQLYKIDPSTLDMWIKILENVPKSILWLLRFPYQGEEHIRKYCVERGLDPSRIVFSNVAAKEEHVRRGQLADVCLDTPLCNGHTTGMDILWTGTPMVTMPLESLASRVATSQLYALGVPELVAKTRQEYVSIAVRLGTDADHLANMRAKVWMARTSSTLFDVKQYCHDMEDLLGQMWKRYESGMPIDHITNNTETPHGL.

TPR repeat units follow at residues 125–158, 193–226, 227–260, 261–294, 295–328, 329–362, 363–396, 397–430, 431–464, 465–498, 499–532, and 533–566; these read LKKV…DPNN, AEAY…KPEF, IDAY…NPDL, YCVR…QPQF, AVAW…DPNF, LDAY…SGNH, AVVH…QPHF, PDAY…CPTH, ADSQ…YPEF, AAAH…APTF, ADAY…NPAF, and ADAH…KPDF. A TPR 13; truncated repeat occupies 567–577; the sequence is PDAYCNLAHCH. Positions 591-607 match the Nuclear localization signal motif; sequence RKLVQIVEDQLCKKRLP. Histidine 612 acts as the Proton acceptor in catalysis. UDP contacts are provided by residues glutamine 954, lysine 957, 1010–1013, 1016–1019, 1034–1036, and aspartate 1040; these read VAAK, HVRR, and GHT.

It belongs to the glycosyltransferase 41 family. O-GlcNAc transferase subfamily.

The protein localises to the nucleus. Its subcellular location is the cytoplasm. It localises to the perinuclear region. It catalyses the reaction L-seryl-[protein] + UDP-N-acetyl-alpha-D-glucosamine = 3-O-(N-acetyl-beta-D-glucosaminyl)-L-seryl-[protein] + UDP + H(+). It carries out the reaction L-threonyl-[protein] + UDP-N-acetyl-alpha-D-glucosamine = 3-O-(N-acetyl-beta-D-glucosaminyl)-L-threonyl-[protein] + UDP + H(+). Its pathway is protein modification; protein glycosylation. In terms of biological role, addition of nucleotide-activated sugars directly onto the polypeptide through O-glycosidic linkage with the hydroxyl of serine or threonine. Influences tap habituation in the mechanosensory neurons cell autonomously. The chain is UDP-N-acetylglucosamine--peptide N-acetylglucosaminyltransferase (ogt-1) from Caenorhabditis elegans.